The chain runs to 899 residues: Lipoxygenase 2, chloroplastic (899 aa).

The N-terminal 57 residues, 1–57 (MLKPQIHKPHLVNKLPLGTPFIPSHASIASFSTTSLRTLSVQKCYRRYIRYTSSNIK), are a transit peptide targeting the chloroplast. Residues 83–203 (ALTAVTVGLL…DNPDKRIFFL (121 aa)) enclose the PLAT domain. Residues 206 to 899 (SYLPSETPEG…GKGVPYSISI (694 aa)) enclose the Lipoxygenase domain. The disordered stretch occupies residues 252-286 (DPDTDSDMARPVLGGNEHPFPRRCRTGRKMTSTEP). 5 residues coordinate Fe cation: His-557, His-562, His-749, Asn-753, and Ile-899.

Belongs to the lipoxygenase family. It depends on Fe cation as a cofactor. In terms of tissue distribution, confined to glandular trichomes in flowers.

The protein resides in the plastid. It is found in the chloroplast. It participates in lipid metabolism; oxylipin biosynthesis. In terms of biological role, plant lipoxygenases may be involved in a number of diverse aspects of plant physiology including growth and development, pest resistance, and senescence or responses to wounding. Catalyzes the hydroperoxidation of lipids containing a cis,cis-1,4-pentadiene structure. The chain is Lipoxygenase 2, chloroplastic from Tanacetum cinerariifolium (Dalmatian daisy).